The primary structure comprises 979 residues: Probable serine/threonine-protein kinase iksA (979 aa).

Residues N32, N110, N120, N121, N147, N155, N161, N220, N231, and N243 are each glycosylated (N-linked (GlcNAc...) asparagine). The tract at residues S207–S245 is disordered. A compositionally biased stretch (low complexity) spans N212–S244. Residues F261–I568 enclose the Protein kinase domain. ATP is bound by residues I267–V275 and K293. The active-site Proton acceptor is D397. Residues N592, N597, N615, N645, N646, N663, and N699 are each glycosylated (N-linked (GlcNAc...) asparagine). Polar residues predominate over residues T593–T602. The disordered stretch occupies residues T593–N666. Residues S610–N666 are compositionally biased toward low complexity. Residues N713–S727 show a composition bias toward acidic residues. Residues N713 to P793 are disordered. Low complexity-rich tracts occupy residues T728 to D737 and N753 to K773. N-linked (GlcNAc...) asparagine glycosylation is found at N731 and N734. Residues F846–V866 form a helical membrane-spanning segment. N-linked (GlcNAc...) asparagine glycosylation is found at N870 and N894. The next 2 helical transmembrane spans lie at I912–P932 and F956–F976.

This sequence belongs to the protein kinase superfamily. Ser/Thr protein kinase family.

It localises to the membrane. It carries out the reaction L-seryl-[protein] + ATP = O-phospho-L-seryl-[protein] + ADP + H(+). It catalyses the reaction L-threonyl-[protein] + ATP = O-phospho-L-threonyl-[protein] + ADP + H(+). This is Probable serine/threonine-protein kinase iksA (iksA) from Dictyostelium discoideum (Social amoeba).